Here is a 323-residue protein sequence, read N- to C-terminus: DNA primase small subunit PriS (323 aa).

Residues D97, D99, and D274 contribute to the active site.

The protein belongs to the eukaryotic-type primase small subunit family. In terms of assembly, heterodimer of a small subunit (PriS) and a large subunit (PriL). The cofactor is Mg(2+). Requires Mn(2+) as cofactor.

In terms of biological role, catalytic subunit of DNA primase, an RNA polymerase that catalyzes the synthesis of short RNA molecules used as primers for DNA polymerase during DNA replication. The small subunit contains the primase catalytic core and has DNA synthesis activity on its own. Binding to the large subunit stabilizes and modulates the activity, increasing the rate of DNA synthesis while decreasing the length of the DNA fragments, and conferring RNA synthesis capability. The DNA polymerase activity may enable DNA primase to also catalyze primer extension after primer synthesis. May also play a role in DNA repair. The sequence is that of DNA primase small subunit PriS from Methanothermobacter thermautotrophicus (strain ATCC 29096 / DSM 1053 / JCM 10044 / NBRC 100330 / Delta H) (Methanobacterium thermoautotrophicum).